The following is a 688-amino-acid chain: MANDPRHLPSRKLLVTCALPYANGSIHLGHMLEHIQADIWVRYQRLRGNTVNFICADDAHGTPIMLKAQQMGITPEEMIAAVSEEHQKDFAGFDISFDNYHSTHSEENRELASHIYLELKKNGFISSRTISQLFDPEKEMFLPDRFVKGTCPKCKSEDQYGDNCDNCGETYSPTELINPKSAVSGATPVMKDSEHFFFDLPQFESMLKEWTRSGSLQSETANKMQEWFESGLQQWDISRDAPYFGFEIPGEKDKFFYVWLDAPIGYMGSFKNLCNKRDDLDFDEYWNKDSKTELYHFIGKDIVYFHSLFWPAMLEGSGFRKPNNVFVHGYVTVNGAKMSKSKGTFVKASTYLDHLDPECLRYYYAAKLNSRIDDLDLNLEDFTQRVNADVVNKIVNLASRNAGFIAKRFEGKLSDNFAEPELYNEFVAAADRIAELFEAREFGRAIREITALADKANQYVDEKAPWVVAKEEGKDQELQEICSVGINLFRVLMTYLKPVMPALAARTEAFLNQELTWEGIAQPLTGHEITKFKALFNRIDPKNIEAMIEASKEDAAAEMAAKEKAEAAKTETELSKDPIADEIEFDTFAQVDLRIARIISCEEVPKANKLLKFQLDIGGETRQVFSGIKSAYKPEELEGKLTVMVANLKPRKMKFGMSEGMILAAGPGGSDLWILEPHEGAQPGMRVM.

The 'HIGH' region motif lies at 20 to 30 (PYANGSIHLGH). Zn(2+) contacts are provided by C151, C154, C164, and C167. The 'KMSKS' region signature appears at 337-341 (KMSKS). K340 serves as a coordination point for ATP. Positions 587 to 688 (TFAQVDLRIA…EGAQPGMRVM (102 aa)) constitute a tRNA-binding domain.

It belongs to the class-I aminoacyl-tRNA synthetase family. MetG type 1 subfamily. In terms of assembly, homodimer. Zn(2+) is required as a cofactor.

It localises to the cytoplasm. The enzyme catalyses tRNA(Met) + L-methionine + ATP = L-methionyl-tRNA(Met) + AMP + diphosphate. In terms of biological role, is required not only for elongation of protein synthesis but also for the initiation of all mRNA translation through initiator tRNA(fMet) aminoacylation. The protein is Methionine--tRNA ligase of Vibrio parahaemolyticus serotype O3:K6 (strain RIMD 2210633).